The chain runs to 347 residues: N-acetyl-gamma-glutamyl-phosphate reductase (347 aa).

The active site involves cysteine 150.

The protein belongs to the NAGSA dehydrogenase family. Type 1 subfamily.

It is found in the cytoplasm. It catalyses the reaction N-acetyl-L-glutamate 5-semialdehyde + phosphate + NADP(+) = N-acetyl-L-glutamyl 5-phosphate + NADPH + H(+). Its pathway is amino-acid biosynthesis; L-arginine biosynthesis; N(2)-acetyl-L-ornithine from L-glutamate: step 3/4. In terms of biological role, catalyzes the NADPH-dependent reduction of N-acetyl-5-glutamyl phosphate to yield N-acetyl-L-glutamate 5-semialdehyde. The chain is N-acetyl-gamma-glutamyl-phosphate reductase from Halothermothrix orenii (strain H 168 / OCM 544 / DSM 9562).